The sequence spans 812 residues: DNA replication licensing factor MCM3 (812 aa).

Position 2 is an N-acetylalanine (Ala2). The residue at position 160 (Ser160) is a Phosphoserine. The residue at position 293 (Lys293) is an N6-acetyllysine. An MCM domain is found at 295–502; sequence VFEQLARSLA…QDREISDHVL (208 aa). ADP is bound by residues Gln353, Leu393, Glu394, Ala395, and Ala397. The short motif at 477–480 is the Arginine finger element; the sequence is SRFD. At Lys547 the chain carries N6-acetyllysine. Residue Ser611 is modified to Phosphoserine. Arg664 is a binding site for ATP. A disordered region spans residues 664–744; sequence RKKASEDESD…TQDSQKVELS (81 aa). Residues Ser668, Ser672, and Ser681 each carry the phosphoserine modification. A compositionally biased stretch (acidic residues) spans 670 to 681; sequence DESDLEDEEEKS. A Phosphotyrosine modification is found at Tyr705. A Phosphoserine modification is found at Ser708. Thr719, Thr722, and Thr729 each carry phosphothreonine. The span at 720–744 shows a compositional bias: basic and acidic residues; it reads PKTDDSQEKTDDSQETQDSQKVELS. A phosphoserine mark is found at Ser732 and Ser738.

It belongs to the MCM family. Component of the MCM2-7 complex. The complex forms a toroidal hexameric ring with the proposed subunit order MCM2-MCM6-MCM4-MCM7-MCM3-MCM5. Component of the CMG helicase complex, a hexameric ring of related MCM2-7 subunits stabilized by CDC45 and the tetrameric GINS complex. Associated with the replication-specific DNA polymerase alpha. Interacts with MCMBP. Interacts with ANKRD17. Interacts with MCM3AP; this interaction leads to MCM3 acetylation. Acetylated by MCM3AP. Post-translationally, O-glycosylated (O-GlcNAcylated), in a cell cycle-dependent manner.

Its subcellular location is the nucleus. It localises to the chromosome. The catalysed reaction is ATP + H2O = ADP + phosphate + H(+). Functionally, acts as a component of the MCM2-7 complex (MCM complex) which is the replicative helicase essential for 'once per cell cycle' DNA replication initiation and elongation in eukaryotic cells. Core component of CDC45-MCM-GINS (CMG) helicase, the molecular machine that unwinds template DNA during replication, and around which the replisome is built. The active ATPase sites in the MCM2-7 ring are formed through the interaction surfaces of two neighboring subunits such that a critical structure of a conserved arginine finger motif is provided in trans relative to the ATP-binding site of the Walker A box of the adjacent subunit. The six ATPase active sites, however, are likely to contribute differentially to the complex helicase activity. Required for the entry in S phase and for cell division. The polypeptide is DNA replication licensing factor MCM3 (Mcm3) (Mus musculus (Mouse)).